The primary structure comprises 444 residues: Na(+)/H(+) antiporter NhaA (444 aa).

11 helical membrane-spanning segments follow: residues threonine 27–leucine 47, isoleucine 72–isoleucine 92, methionine 108–isoleucine 128, alanine 136–leucine 156, phenylalanine 167–tyrosine 187, glutamate 190–asparagine 210, phenylalanine 212–leucine 232, histidine 312–isoleucine 332, valine 349–isoleucine 369, valine 385–leucine 405, and isoleucine 419–isoleucine 439.

Belongs to the NhaA Na(+)/H(+) (TC 2.A.33) antiporter family.

It localises to the cell inner membrane. It carries out the reaction Na(+)(in) + 2 H(+)(out) = Na(+)(out) + 2 H(+)(in). Functionally, na(+)/H(+) antiporter that extrudes sodium in exchange for external protons. The polypeptide is Na(+)/H(+) antiporter NhaA (Sulfurimonas denitrificans (strain ATCC 33889 / DSM 1251) (Thiomicrospira denitrificans (strain ATCC 33889 / DSM 1251))).